The primary structure comprises 61 residues: Large ribosomal subunit protein uL30 (61 aa).

Belongs to the universal ribosomal protein uL30 family. Part of the 50S ribosomal subunit.

The chain is Large ribosomal subunit protein uL30 from Caulobacter vibrioides (strain ATCC 19089 / CIP 103742 / CB 15) (Caulobacter crescentus).